Reading from the N-terminus, the 996-residue chain is KK-1 biosynthesis cluster protein D (996 aa).

Disordered stretches follow at residues 307 to 333, 425 to 449, 489 to 556, and 571 to 602; these read HDTD…PELD, EQDN…ARDL, AGVA…ALRA, and STHS…SLHS. 2 stretches are compositionally biased toward polar residues: residues 318–329 and 428–439; these read PIRSNKLSQSKQ and NQTNEEGTGEVQ. Composition is skewed to basic and acidic residues over residues 440 to 449 and 500 to 527; these read SQRDRRARDL and RAAE…DKAA. Residues 572 to 590 show a composition bias toward polar residues; sequence THSIHQRASVNTTAPTVAR.

It functions in the pathway secondary metabolite biosynthesis. Functionally, part of the gene cluster that mediates the biosynthesis of KK-1, a novel cyclic depsipeptide with 10 residues which is a promising active compound with high activity against many plant pathogens, especially Botrytis cinerea. The role of kk1D in KK-1 biosynthesis has still to be determined. The nonribosomal peptide synthetase (NRPS) kk1B catalyzes the elongation and cyclization of the decapeptide chain composed of 1 D-lactic acid residue (D-Lac), 1 pipecolic acid residue (Pip), 1 aspartic acid residue (Asp), 1 isoleucine residue (Ile), 1 glycine residue (Gly), 1 tyrosine residue (Tyr) and 4 valine residues (Val). The Asp, Ile and 3 Val residues are N-methylated by the 5 methyltransferase domains from the NRPS (found in modules 3, 5, 6, 7 and 9), whereas the Tyr residue is O-methylated by the cluster encoded O-methyltransferase kk1A. The thioesterase kk1J is likely to be involved in the corrective mechanism of peptide chain synthesis. The D-lactate dehydrogenase kk1H is involved in the synthesis of D-lactic acid from pyruvic acid, which is recognized by the A domain of the first kk1B module. The pyrroline-5-carboxylate reductase kk1I is involved in the synthesis of the L-pipecolic acid residue of KK-1 from delta-1-pyrroline-5-carboxylate (P5C), a metabolic intermediate of lysine. It is still unclear how kk1C and kk1D are involved in the production of KK-1. This chain is KK-1 biosynthesis cluster protein D, found in Curvularia clavata.